The chain runs to 364 residues: Methylthioribose-1-phosphate isomerase (364 aa).

Aspartate 246 (proton donor) is an active-site residue.

The protein belongs to the eIF-2B alpha/beta/delta subunits family. MtnA subfamily.

It is found in the cytoplasm. The protein localises to the nucleus. The enzyme catalyses 5-(methylsulfanyl)-alpha-D-ribose 1-phosphate = 5-(methylsulfanyl)-D-ribulose 1-phosphate. It participates in amino-acid biosynthesis; L-methionine biosynthesis via salvage pathway; L-methionine from S-methyl-5-thio-alpha-D-ribose 1-phosphate: step 1/6. In terms of biological role, catalyzes the interconversion of methylthioribose-1-phosphate (MTR-1-P) into methylthioribulose-1-phosphate (MTRu-1-P). In Bombyx mori (Silk moth), this protein is Methylthioribose-1-phosphate isomerase.